The primary structure comprises 244 residues: Protein crossbronx (244 aa).

Residues Gln20–Glu176 form the UBC core domain. The segment at Ala209–Glu244 is disordered.

It belongs to the ubiquitin-conjugating enzyme family. FTS subfamily.

The polypeptide is Protein crossbronx (cbx) (Drosophila sechellia (Fruit fly)).